The sequence spans 185 residues: Tetrahydromethanopterin S-methyltransferase subunit A 2 (185 aa).

Over 1 to 21 the chain is Cytoplasmic; that stretch reads MVDKKVDKKPVPEDWPHIVGD. The chain crosses the membrane as a helical span at residues 22-38; that stretch reads YVVGDAESPVAVVTLGS. Residues 39 to 185 are Extracellular-facing; it reads HMEDEPVRAG…LNKNKPDENT (147 aa). Residue His88 participates in 5-hydroxybenzimidazolylcob(I)amide binding.

The protein belongs to the MtrA family. The complex is composed of 8 subunits; MtrA, MtrB, MtrC, MtrD, MtrE, MtrF, MtrG and MtrH. 5-hydroxybenzimidazolylcob(I)amide serves as cofactor.

It localises to the cell membrane. The catalysed reaction is 5-methyl-5,6,7,8-tetrahydromethanopterin + coenzyme M + 2 Na(+)(in) = 5,6,7,8-tetrahydromethanopterin + methyl-coenzyme M + 2 Na(+)(out). It functions in the pathway one-carbon metabolism; methanogenesis from CO(2); methyl-coenzyme M from 5,10-methylene-5,6,7,8-tetrahydromethanopterin: step 2/2. Functionally, part of a complex that catalyzes the formation of methyl-coenzyme M and tetrahydromethanopterin from coenzyme M and methyl-tetrahydromethanopterin. This is an energy-conserving, sodium-ion translocating step. This is Tetrahydromethanopterin S-methyltransferase subunit A 2 from Methanothermobacter marburgensis (strain ATCC BAA-927 / DSM 2133 / JCM 14651 / NBRC 100331 / OCM 82 / Marburg) (Methanobacterium thermoautotrophicum).